The sequence spans 732 residues: 1,4-alpha-glucan branching enzyme GlgB 1 (732 aa).

The active-site Nucleophile is aspartate 411. Glutamate 464 serves as the catalytic Proton donor.

The protein belongs to the glycosyl hydrolase 13 family. GlgB subfamily. Monomer.

The catalysed reaction is Transfers a segment of a (1-&gt;4)-alpha-D-glucan chain to a primary hydroxy group in a similar glucan chain.. The protein operates within glycan biosynthesis; glycogen biosynthesis. In terms of biological role, catalyzes the formation of the alpha-1,6-glucosidic linkages in glycogen by scission of a 1,4-alpha-linked oligosaccharide from growing alpha-1,4-glucan chains and the subsequent attachment of the oligosaccharide to the alpha-1,6 position. The protein is 1,4-alpha-glucan branching enzyme GlgB 1 of Xanthomonas euvesicatoria pv. vesicatoria (strain 85-10) (Xanthomonas campestris pv. vesicatoria).